The following is a 406-amino-acid chain: 2,3-bisphosphoglycerate-independent phosphoglycerate mutase (406 aa).

The protein belongs to the BPG-independent phosphoglycerate mutase family. A-PGAM subfamily.

The enzyme catalyses (2R)-2-phosphoglycerate = (2R)-3-phosphoglycerate. Its pathway is carbohydrate degradation; glycolysis; pyruvate from D-glyceraldehyde 3-phosphate: step 3/5. In terms of biological role, catalyzes the interconversion of 2-phosphoglycerate and 3-phosphoglycerate. This Methanococcus maripaludis (strain C7 / ATCC BAA-1331) protein is 2,3-bisphosphoglycerate-independent phosphoglycerate mutase.